Here is a 189-residue protein sequence, read N- to C-terminus: Protein GrpE (189 aa).

A disordered region spans residues 1–37 (MSDSSKEKKKKFADMVSRQKGDDQQSDNHKQTDDLNE). Residues 17-33 (SRQKGDDQQSDNHKQTD) are compositionally biased toward basic and acidic residues.

This sequence belongs to the GrpE family. As to quaternary structure, homodimer.

Its subcellular location is the cytoplasm. Functionally, participates actively in the response to hyperosmotic and heat shock by preventing the aggregation of stress-denatured proteins, in association with DnaK and GrpE. It is the nucleotide exchange factor for DnaK and may function as a thermosensor. Unfolded proteins bind initially to DnaJ; upon interaction with the DnaJ-bound protein, DnaK hydrolyzes its bound ATP, resulting in the formation of a stable complex. GrpE releases ADP from DnaK; ATP binding to DnaK triggers the release of the substrate protein, thus completing the reaction cycle. Several rounds of ATP-dependent interactions between DnaJ, DnaK and GrpE are required for fully efficient folding. This Wolbachia pipientis wMel protein is Protein GrpE.